A 1217-amino-acid polypeptide reads, in one-letter code: Bud site selection protein 4 (1217 aa).

Residues 430–514 (EAELISNPER…PPMNGLSTMF (85 aa)) are disordered. Positions 437–468 (PERSGSPTNDNMSQHSQNRQLLGVSEVSQAQQ) are enriched in polar residues. Basic and acidic residues predominate over residues 470-500 (PEHHVEMSVEFQDEGRRDITSSFSRESDRIE). In terms of domain architecture, PH spans 1086–1195 (RVNNEGFLWQ…WVEILTSVVE (110 aa)).

The protein belongs to the BUD4 family.

It is found in the bud neck. In terms of biological role, required for selection of future bud sites. Cooperates with other bud site selection proteins to recognize a spatial landmark during mitosis and they subsequently become a landmark for downstream polarity establishment factors that coordinate budding and cytokinesis. Involved in the septin organization at the bud neck. The sequence is that of Bud site selection protein 4 (BUD4) from Kluyveromyces lactis (strain ATCC 8585 / CBS 2359 / DSM 70799 / NBRC 1267 / NRRL Y-1140 / WM37) (Yeast).